The following is a 516-amino-acid chain: Squalene epoxidase 4 (516 aa).

2 consecutive transmembrane segments (helical) span residues 2 to 22 and 43 to 63; these read TYAWLWTLLAFVLTWMVFHLI and ATDVIIVGAGVAGASLAYALA. FAD-binding positions include 53-54, 73-74, Arg-81, Arg-153, Val-169, Asp-335, and Met-348; these read VA and ER. Residues 435 to 455 form a helical membrane-spanning segment; sequence ILGGMNPHPLTLVLHLVAITL.

This sequence belongs to the squalene monooxygenase family. The cofactor is FAD. Expressed mainly in seedlings and inflorescences.

It localises to the membrane. It catalyses the reaction squalene + reduced [NADPH--hemoprotein reductase] + O2 = (S)-2,3-epoxysqualene + oxidized [NADPH--hemoprotein reductase] + H2O + H(+). Its pathway is terpene metabolism; lanosterol biosynthesis; lanosterol from farnesyl diphosphate: step 2/3. Catalyzes the stereospecific oxidation of squalene to (S)-2,3-epoxysqualene, and is considered to be a rate-limiting enzyme in steroid biosynthesis. This chain is Squalene epoxidase 4 (SQE4), found in Arabidopsis thaliana (Mouse-ear cress).